The chain runs to 825 residues: KH domain-containing protein YLL032C (825 aa).

A KH domain is found at 482–556 (PAEESFFIPE…ANICLAKNDL (75 aa)). Over residues 727-740 (SSKSNTSNSNTNGN) the composition is skewed to low complexity. Residues 727 to 766 (SSKSNTSNSNTNGNFRSMNNAKSRTTIDNTSQSGASPQRH) are disordered. Residues 741 to 762 (FRSMNNAKSRTTIDNTSQSGAS) are compositionally biased toward polar residues. A Phosphoserine modification is found at S762.

Its subcellular location is the cytoplasm. In Saccharomyces cerevisiae (strain ATCC 204508 / S288c) (Baker's yeast), this protein is KH domain-containing protein YLL032C.